The following is an 88-amino-acid chain: Small ribosomal subunit protein uS15 (88 aa).

This sequence belongs to the universal ribosomal protein uS15 family. In terms of assembly, part of the 30S ribosomal subunit. Forms a bridge to the 50S subunit in the 70S ribosome, contacting the 23S rRNA.

One of the primary rRNA binding proteins, it binds directly to 16S rRNA where it helps nucleate assembly of the platform of the 30S subunit by binding and bridging several RNA helices of the 16S rRNA. Its function is as follows. Forms an intersubunit bridge (bridge B4) with the 23S rRNA of the 50S subunit in the ribosome. The polypeptide is Small ribosomal subunit protein uS15 (Francisella tularensis subsp. tularensis (strain FSC 198)).